Reading from the N-terminus, the 150-residue chain is SsrA-binding protein (150 aa).

Belongs to the SmpB family.

It localises to the cytoplasm. In terms of biological role, required for rescue of stalled ribosomes mediated by trans-translation. Binds to transfer-messenger RNA (tmRNA), required for stable association of tmRNA with ribosomes. tmRNA and SmpB together mimic tRNA shape, replacing the anticodon stem-loop with SmpB. tmRNA is encoded by the ssrA gene; the 2 termini fold to resemble tRNA(Ala) and it encodes a 'tag peptide', a short internal open reading frame. During trans-translation Ala-aminoacylated tmRNA acts like a tRNA, entering the A-site of stalled ribosomes, displacing the stalled mRNA. The ribosome then switches to translate the ORF on the tmRNA; the nascent peptide is terminated with the 'tag peptide' encoded by the tmRNA and targeted for degradation. The ribosome is freed to recommence translation, which seems to be the essential function of trans-translation. In Thermotoga maritima (strain ATCC 43589 / DSM 3109 / JCM 10099 / NBRC 100826 / MSB8), this protein is SsrA-binding protein.